Reading from the N-terminus, the 508-residue chain is Histidine ammonia-lyase (508 aa).

The 5-imidazolinone (Ala-Gly) cross-link spans 141 to 143; the sequence is ASG. Ser-142 is modified (2,3-didehydroalanine (Ser)).

Belongs to the PAL/histidase family. In terms of processing, contains an active site 4-methylidene-imidazol-5-one (MIO), which is formed autocatalytically by cyclization and dehydration of residues Ala-Ser-Gly.

The protein resides in the cytoplasm. It carries out the reaction L-histidine = trans-urocanate + NH4(+). It participates in amino-acid degradation; L-histidine degradation into L-glutamate; N-formimidoyl-L-glutamate from L-histidine: step 1/3. This is Histidine ammonia-lyase (hutH) from Bacillus subtilis (strain 168).